The sequence spans 612 residues: DEAD-box ATP-dependent RNA helicase 11 (612 aa).

Disordered stretches follow at residues 1–70 (MSAS…SGGG) and 83–104 (GAGGGGGGGGGWNNRSGGWDRR). Residue S2 is modified to N-acetylserine. Composition is skewed to gly residues over residues 61–70 (SGGGGASGGG) and 83–94 (GAGGGGGGGGGW). A Q motif motif is present at residues 151-179 (NTFADIDLGDALNLNIRRCKYVRPTPVQR). Residues 182-366 (IPILLAERDL…ADFMSNYIFL (185 aa)) enclose the Helicase ATP-binding domain. 195 to 202 (AQTGSGKT) lines the ATP pocket. The DEAD box motif lies at 310 to 313 (DEAD). The 166-residue stretch at 377–542 (LITQRVEFVQ…EVPEWLTRYA (166 aa)) folds into the Helicase C-terminal domain. The disordered stretch occupies residues 547-583 (FGGGKKRSGGRFGGRDFRREGSYSRGGGGGGGGGGSD). Residues 559-568 (GGRDFRREGS) are compositionally biased toward basic and acidic residues. Gly residues predominate over residues 570–583 (SRGGGGGGGGGGSD).

It belongs to the DEAD box helicase family. DDX3/DED1 subfamily.

The catalysed reaction is ATP + H2O = ADP + phosphate + H(+). This chain is DEAD-box ATP-dependent RNA helicase 11 (RH11), found in Arabidopsis thaliana (Mouse-ear cress).